Here is a 161-residue protein sequence, read N- to C-terminus: Deoxyuridine 5'-triphosphate nucleotidohydrolase (161 aa).

Residues Arg80–Gly82, Asn93, Thr97–Asp99, and Lys107 each bind substrate.

It belongs to the dUTPase family. The cofactor is Mg(2+).

It carries out the reaction dUTP + H2O = dUMP + diphosphate + H(+). The protein operates within pyrimidine metabolism; dUMP biosynthesis; dUMP from dCTP (dUTP route): step 2/2. Functionally, this enzyme is involved in nucleotide metabolism: it produces dUMP, the immediate precursor of thymidine nucleotides and it decreases the intracellular concentration of dUTP so that uracil cannot be incorporated into DNA. The polypeptide is Deoxyuridine 5'-triphosphate nucleotidohydrolase (Mesorhizobium japonicum (strain LMG 29417 / CECT 9101 / MAFF 303099) (Mesorhizobium loti (strain MAFF 303099))).